A 112-amino-acid chain; its full sequence is Putative pterin-4-alpha-carbinolamine dehydratase (112 aa).

It belongs to the pterin-4-alpha-carbinolamine dehydratase family.

It catalyses the reaction (4aS,6R)-4a-hydroxy-L-erythro-5,6,7,8-tetrahydrobiopterin = (6R)-L-erythro-6,7-dihydrobiopterin + H2O. The polypeptide is Putative pterin-4-alpha-carbinolamine dehydratase (Shewanella denitrificans (strain OS217 / ATCC BAA-1090 / DSM 15013)).